Here is a 615-residue protein sequence, read N- to C-terminus: Delta(14)-sterol reductase LBR (615 aa).

The Tudor domain maps to 1-62 (MPSRKFADGE…DIKPLTSFRQ (62 aa)). Topologically, residues 1 to 211 (MPSRKFADGE…IRAKDLEFGG (211 aa)) are nuclear. Residues 52 to 109 (NDIKPLTSFRQRKGGSTSSSPSRRRGSRSRSRSRSPGRPPKSARRSASASHQADIKEA) form a disordered region. Lys55 carries the post-translational modification N6-acetyllysine. A Phosphothreonine modification is found at Thr58. Ser59 and Ser67 each carry phosphoserine. Phosphoserine; by CDK1 occurs at positions 71 and 86. The span at 73–86 (SRRRGSRSRSRSRS) shows a compositional bias: basic residues. A phosphoserine mark is found at Ser97 and Ser99. Position 118 is a phosphothreonine (Thr118). The residue at position 128 (Ser128) is a Phosphoserine. Thr200 carries the phosphothreonine modification. 8 helical membrane passes run 212-232 (VPGV…LLLM), 258-278 (VFGV…LPIG), 299-319 (FYAF…GVEF), 326-346 (FLQF…YLYM), 386-406 (FCEL…MLLA), 447-467 (IIHD…VPFI), 481-501 (EVSW…YVIF), and 561-581 (PCGF…MLLV). Lys594 and Lys601 each carry N6-acetyllysine.

The protein belongs to the ERG4/ERG24 family. Interacts with CBX5. Interacts with DNA. Interaction with DNA is sequence independent with higher affinity for supercoiled and relaxed circular DNA than linear DNA. Interacts with lamin B. Interacts with CLNK. Interacts with TMEM147; promoting LBR localization to the nucleus inner membrane. In terms of processing, phosphorylated by CDK1 in mitosis when the inner nuclear membrane breaks down into vesicles that dissociate from the lamina and the chromatin. It is phosphorylated by different protein kinases in interphase when the membrane is associated with these structures. Phosphorylation of LBR and HP1 proteins may be responsible for some of the alterations in chromatin organization and nuclear structure which occur at various times during the cell cycle. Phosphorylated by SRPK1. In late anaphase LBR is dephosphorylated, probably by PP1 and/or PP2A, allowing reassociation with chromatin. In terms of tissue distribution, expressed in the bone marrow, liver, heart, adrenal gland, lung, placenta and uterus. Expressed in osteoclasts and osteoblast-like cells.

It is found in the nucleus inner membrane. The protein resides in the endoplasmic reticulum membrane. It localises to the cytoplasm. Its subcellular location is the nucleus. The enzyme catalyses 5alpha-cholest-8,14-dien-3beta-ol + NADPH + H(+) = 5alpha-cholest-8-en-3beta-ol + NADP(+). The catalysed reaction is 4,4-dimethyl-5alpha-cholesta-8,24-dien-3beta-ol + NADP(+) = 4,4-dimethyl-5alpha-cholesta-8,14,24-trien-3beta-ol + NADPH + H(+). It carries out the reaction 4,4-dimethyl-8,14-cholestadien-3beta-ol + NADPH + H(+) = 4,4-dimethyl-5alpha-cholest-8-en-3beta-ol + NADP(+). It functions in the pathway steroid biosynthesis; cholesterol biosynthesis. Its function is as follows. Catalyzes the reduction of the C14-unsaturated bond of lanosterol, as part of the metabolic pathway leading to cholesterol biosynthesis. Plays a critical role in myeloid cell cholesterol biosynthesis which is essential to both myeloid cell growth and functional maturation. Mediates the activation of NADPH oxidases, perhaps by maintaining critical levels of cholesterol required for membrane lipid raft formation during neutrophil differentiation. Anchors the lamina and the heterochromatin to the inner nuclear membrane. The protein is Delta(14)-sterol reductase LBR (LBR) of Homo sapiens (Human).